Here is a 302-residue protein sequence, read N- to C-terminus: Recombination-associated protein RdgC (302 aa).

The protein belongs to the RdgC family.

The protein resides in the cytoplasm. It localises to the nucleoid. Its function is as follows. May be involved in recombination. In Xanthomonas campestris pv. campestris (strain 8004), this protein is Recombination-associated protein RdgC.